Reading from the N-terminus, the 2922-residue chain is Small ribosomal subunit protein uS4c (2922 aa).

Positions 111 to 174 (MRLDNIVFRL…ISMELVSRFL (64 aa)) constitute an S4 RNA-binding domain.

The protein belongs to the universal ribosomal protein uS4 family. Part of the 30S ribosomal subunit. Contacts protein S5. The interaction surface between S4 and S5 is involved in control of translational fidelity.

It localises to the plastid. The protein resides in the chloroplast. In terms of biological role, one of the primary rRNA binding proteins, it binds directly to 16S rRNA where it nucleates assembly of the body of the 30S subunit. Functionally, with S5 and S12 plays an important role in translational accuracy. In Stigeoclonium helveticum (Green alga), this protein is Small ribosomal subunit protein uS4c (rps4).